We begin with the raw amino-acid sequence, 294 residues long: 4-hydroxy-tetrahydrodipicolinate synthase (294 aa).

S47 lines the pyruvate pocket. Residue Y135 is the Proton donor/acceptor of the active site. Catalysis depends on K163, which acts as the Schiff-base intermediate with substrate. Position 205 (I205) interacts with pyruvate.

This sequence belongs to the DapA family. Homotetramer; dimer of dimers.

The protein resides in the cytoplasm. It carries out the reaction L-aspartate 4-semialdehyde + pyruvate = (2S,4S)-4-hydroxy-2,3,4,5-tetrahydrodipicolinate + H2O + H(+). It participates in amino-acid biosynthesis; L-lysine biosynthesis via DAP pathway; (S)-tetrahydrodipicolinate from L-aspartate: step 3/4. Its function is as follows. Catalyzes the condensation of (S)-aspartate-beta-semialdehyde [(S)-ASA] and pyruvate to 4-hydroxy-tetrahydrodipicolinate (HTPA). This chain is 4-hydroxy-tetrahydrodipicolinate synthase, found in Ralstonia nicotianae (strain ATCC BAA-1114 / GMI1000) (Ralstonia solanacearum).